A 201-amino-acid chain; its full sequence is UPF0301 protein ROP_34500 (201 aa).

Belongs to the UPF0301 (AlgH) family.

The polypeptide is UPF0301 protein ROP_34500 (Rhodococcus opacus (strain B4)).